A 952-amino-acid chain; its full sequence is Glycine dehydrogenase (decarboxylating) (952 aa).

The residue at position 703 (Lys-703) is an N6-(pyridoxal phosphate)lysine.

This sequence belongs to the GcvP family. The glycine cleavage system is composed of four proteins: P, T, L and H. The cofactor is pyridoxal 5'-phosphate.

The enzyme catalyses N(6)-[(R)-lipoyl]-L-lysyl-[glycine-cleavage complex H protein] + glycine + H(+) = N(6)-[(R)-S(8)-aminomethyldihydrolipoyl]-L-lysyl-[glycine-cleavage complex H protein] + CO2. The glycine cleavage system catalyzes the degradation of glycine. The P protein binds the alpha-amino group of glycine through its pyridoxal phosphate cofactor; CO(2) is released and the remaining methylamine moiety is then transferred to the lipoamide cofactor of the H protein. The sequence is that of Glycine dehydrogenase (decarboxylating) from Mycobacterium leprae (strain Br4923).